We begin with the raw amino-acid sequence, 733 residues long: Polyribonucleotide nucleotidyltransferase (733 aa).

Mg(2+) contacts are provided by Asp-503 and Asp-509. The KH domain maps to 570 to 629; that stretch reads PRLTTIQIPVDAIGMVIGKGGETIRSITEETGAEINIDDDGTVTIACSSPEATKAAVETI. The S1 motif domain maps to 639–713; that stretch reads GTIYMGKVRD…GKTKFALSIK (75 aa).

It belongs to the polyribonucleotide nucleotidyltransferase family. Requires Mg(2+) as cofactor.

The protein localises to the cytoplasm. It catalyses the reaction RNA(n+1) + phosphate = RNA(n) + a ribonucleoside 5'-diphosphate. Involved in mRNA degradation. Catalyzes the phosphorolysis of single-stranded polyribonucleotides processively in the 3'- to 5'-direction. The sequence is that of Polyribonucleotide nucleotidyltransferase from Chlorobaculum tepidum (strain ATCC 49652 / DSM 12025 / NBRC 103806 / TLS) (Chlorobium tepidum).